The following is a 296-amino-acid chain: NAD kinase (296 aa).

The Proton acceptor role is filled by Asp-72. NAD(+) contacts are provided by residues Asp-72 to Gly-73, Asn-146 to Asp-147, Arg-157, Arg-174, Asp-176, Thr-187 to Ser-192, and Gln-247.

This sequence belongs to the NAD kinase family. A divalent metal cation is required as a cofactor.

The protein resides in the cytoplasm. The catalysed reaction is NAD(+) + ATP = ADP + NADP(+) + H(+). Involved in the regulation of the intracellular balance of NAD and NADP, and is a key enzyme in the biosynthesis of NADP. Catalyzes specifically the phosphorylation on 2'-hydroxyl of the adenosine moiety of NAD to yield NADP. In Hahella chejuensis (strain KCTC 2396), this protein is NAD kinase.